A 376-amino-acid chain; its full sequence is N-acetyldiaminopimelate deacetylase (376 aa).

Asp-70 is an active-site residue. Glu-129 (proton acceptor) is an active-site residue.

The protein belongs to the peptidase M20A family. N-acetyldiaminopimelate deacetylase subfamily.

It catalyses the reaction N-acetyl-(2S,6S)-2,6-diaminopimelate + H2O = (2S,6S)-2,6-diaminopimelate + acetate. The protein operates within amino-acid biosynthesis; L-lysine biosynthesis via DAP pathway; LL-2,6-diaminopimelate from (S)-tetrahydrodipicolinate (acetylase route): step 3/3. Its function is as follows. Catalyzes the conversion of N-acetyl-diaminopimelate to diaminopimelate and acetate. The polypeptide is N-acetyldiaminopimelate deacetylase (Geobacillus sp. (strain WCH70)).